We begin with the raw amino-acid sequence, 489 residues long: Putative ATP-dependent RNA helicase T26G10.1 (489 aa).

The short motif at 44–72 (KSFAELGVSQPLCDACQRLGWMKPSKIQQ) is the Q motif element. Residues 75-246 (LPHALQGKDV…RASLRDPARV (172 aa)) enclose the Helicase ATP-binding domain. 88-95 (AETGSGKT) serves as a coordination point for ATP. A DEAD box motif is present at residues 194 to 197 (DEAD). Positions 257 to 417 (NLKQHYIFVP…EYKCVENEVM (161 aa)) constitute a Helicase C-terminal domain. The segment at 433 to 489 (EMKEMDEKKKSGKKRRQNDDFGDTEESGGRFKMGIKSMGGRGGSGGGRGGKKKKMSK) is disordered. Over residues 469–480 (SMGGRGGSGGGR) the composition is skewed to gly residues.

Belongs to the DEAD box helicase family. DDX47/RRP3 subfamily.

It localises to the nucleus. The catalysed reaction is ATP + H2O = ADP + phosphate + H(+). Functionally, probable ATP-dependent RNA helicase which may be involved in ribosome biogenesis. This chain is Putative ATP-dependent RNA helicase T26G10.1, found in Caenorhabditis elegans.